We begin with the raw amino-acid sequence, 141 residues long: Hemoglobin subunit alpha-A (141 aa).

One can recognise a Globin domain in the interval 1-141; it reads VLSANDKTNV…VGNVLSAKYR (141 aa). Histidine 58 is a binding site for O2. Histidine 87 provides a ligand contact to heme b.

It belongs to the globin family. Heterotetramer of two alpha chains and two beta chains. In terms of tissue distribution, red blood cells.

Functionally, involved in oxygen transport from the lung to the various peripheral tissues. This chain is Hemoglobin subunit alpha-A (HBAA), found in Trigonoceps occipitalis (White-headed vulture).